The primary structure comprises 701 residues: MATYKVKVATGTDFFSGTLDSISLTIVGTQGESHKQRLNHFGRDFATGAVDDYTVQCQQDLGELIIIRLHKEPHSFLAKDPWYCNYVQICAPDCRVYHFPAYQWMDGYETLALREATGKITADDTLPILLEHRQEEIRAKKDFYHWRVFVPGLPNYVDIPSYHPPPRRCRNPNRPEWDGYIPGFPILINIKATRFLNSNLRFSFVKTASFFYRLGPMALAFKLRGLVDRKRSWKRLKDIKNIFPATKSVVSEYVAEHWTEDSFFGYQYLNGINPGLIRRCTQIPDKFPVTDEMVAPFLGEGTCLQAELERGNIYLADYRILDGIPTVELNGQQQHHCAPMCLLHFGPDGNMMPIAIQLSQTPGPDCPIFLPNDSEWDWLLAKTWVRYAEFYSHEAVAHLLESHLIGEAFCLALLRNLPMCHPLYKLLIPHTRYNVQINSIGRALLLNKGGLSARAMSLGLEGFAQVMVRGLSELTYKSLCIPNDFVERGVQDLPGYYFRDDSLAVWYAMERYVTEIITYYYPNDAAVEGDPELQCWVQEIFKECLLGRESSGFPTCLRTIPELIEYVTMVMYTCSARHAAVNSGQLEYTSWMPNFPSSMRNPPMQTKGLTTLQTYMDTLPDVKTTCIVLLVLWTLCREPDDRRPLGHFPDIHFVEEGPRRSIEAFRQNLNQISHNIRQRNKCLTLPYYYLDPVLIENSISI.

The PLAT domain occupies 2–119 (ATYKVKVATG…TLALREATGK (118 aa)). The Lipoxygenase domain maps to 120–701 (ITADDTLPIL…PVLIENSISI (582 aa)). Residues His398, His403, His578, Asn582, and Ile701 each coordinate Fe cation.

This sequence belongs to the lipoxygenase family. Fe cation serves as cofactor. Expressed in skin epidermis and other stratified epithelia including tongue and forestomach. Low levels of expression are found in trachea, brain and lung. Not expressed in intestine, liver, kidney, adipose tissue, muscle or hematopoietic cells.

It is found in the cytoplasm. Its subcellular location is the perinuclear region. The enzyme catalyses 1-O-methyl-(5Z,8Z,11Z,14Z)-eicosatetraenoate + O2 = 1-O-methyl (5Z,8Z,10E,12R,14Z)-hydroperoxyiecosatetraenoate. It catalyses the reaction 1-O-methyl-(5Z,8Z,11Z,14Z)-eicosatetraenoate + O2 = 1-O-methyl-8-hydroperoxy-(5Z,9E,11Z,14Z)-eicosatetraenoate. It carries out the reaction (5Z,8Z,11Z,14Z)-eicosatetraenoate + O2 = (12R)-hydroperoxy-(5Z,8Z,10E,14Z)-eicosatetraenoate. The catalysed reaction is N-[omega-(9Z,12Z)-octadecadienoyloxy]acyl-beta-D-glucosyl-(1&lt;-&gt;1)-octadecasphing-4E-enine + O2 = N-[omega-(9R)-hydroperoxy-(10E,12Z)-octadecadienoyloxy]acyl-beta-D-glucosyl-(1&lt;-&gt;1)-octadecasphing-4E-enine. The enzyme catalyses a N-[omega-(9Z,12Z)-octadecadienoyloxy]-acylsphin-4E-enine + O2 = a N-[omega-(9R)-hydroperoxy-(10E,12Z)-octadecadienoyloxy]-acylsphin-4E-enine. It catalyses the reaction (6Z,9Z,12Z)-octadecatrienoate + O2 = 10-hydroperoxy-(6Z,8E,12Z)-octadecatrienoate. It carries out the reaction (4Z,7Z,10Z,13Z,16Z,19Z)-docosahexaenoate + O2 = 14-hydroperoxy-(4Z,7Z,10Z,12E,16Z,19Z)-docosahexaenoate. The catalysed reaction is (8Z,11Z,14Z)-eicosatrienoate + O2 = (8Z,10E,14Z)-12-hydroperoxyeicosatrienoate. The enzyme catalyses (5Z,8Z,11Z,14Z,17Z)-eicosapentaenoate + O2 = (5Z,7Z,8Z,10E,14Z,17Z)-12-hydroperoxyeicosapentaenoate. It catalyses the reaction (6Z,9Z,12Z)-octadecatrienoate + O2 = 10R-hydroperoxy-(6Z,8E,12Z)-octadecatrienoate. It carries out the reaction 1-O-methyl-(5Z,8Z,11Z,14Z)-eicosatetraenoate + O2 = 1-O-methyl-(8R)-hydroperoxy-(5Z,9E,11Z,14Z)-eicosatrienoate. The catalysed reaction is 1-O-methyl-(9Z,12Z)-octadecadienoate + O2 = 1-O-methyl-(9R)-hydroperoxy-(10E,12Z)-octadecadienoate. The enzyme catalyses 1-O-methyl-20-hydroxy-(5Z,8Z,11Z,14Z)-eicosatetraenoate + O2 = 1-O-methyl-8-hydroperoxy-20-hydroxy-(5Z,9E,11Z,14Z)-eicosatetraenoate. It catalyses the reaction 1-O-methyl-20-hydroxy-(5Z,8Z,11Z,14Z)-eicosatetraenoate + O2 = 1-O-methyl-12-hydroperoxy-20-hydroxy-(5Z,8Z,10E,14Z)-eicosatetraenoate. It carries out the reaction 1-O-methyl-20-hydroxy-(5Z,8Z,11Z,14Z)-eicosatetraenoate + O2 = 1-O-methyl-9-hydroperoxy-20-hydroxy-(5Z,7E,11Z,14Z)-eicosatetraenoate. The catalysed reaction is 1-O-methyl-(9Z,12Z)-octadecadienoate + O2 = 1-O-methyl-(13S)-hydroperoxy-(9Z,11E)-octadecadienoate. The protein operates within lipid metabolism; hydroperoxy eicosatetraenoic acid biosynthesis. It participates in lipid metabolism; sphingolipid metabolism. Increased by calcium. Catalyzes the regio and stereo-specific incorporation of a single molecule of dioxygen into free and esterified polyunsaturated fatty acids generating lipid hydroperoxides that can be further reduced to the corresponding hydroxy species. Does not convert arachidonic acid to (12R)-hydroperoxyeicosatetraenoic acid/(12R)-HPETE. In the skin, acts upstream of ALOXE3 on the lineolate moiety of esterified omega-hydroxyacyl-sphingosine (EOS) ceramides to produce an epoxy-ketone derivative, a crucial step in the conjugation of omega-hydroxyceramide to membrane proteins. Therefore plays a crucial role in the synthesis of corneocytes lipid envelope and the establishment of the skin barrier to water loss. May also play a role in the regulation of the expression of airway mucins. In Mus musculus (Mouse), this protein is Arachidonate 12-lipoxygenase, 12R-type.